The primary structure comprises 540 residues: Chaperonin GroEL 3 (540 aa).

Residues 30–33, lysine 51, 87–91, glycine 415, 479–481, and aspartate 495 contribute to the ATP site; these read TLGP, DGTTT, and NAA.

Belongs to the chaperonin (HSP60) family. As to quaternary structure, forms a cylinder of 14 subunits composed of two heptameric rings stacked back-to-back. Interacts with the co-chaperonin GroES.

Its subcellular location is the cytoplasm. The catalysed reaction is ATP + H2O + a folded polypeptide = ADP + phosphate + an unfolded polypeptide.. In terms of biological role, together with its co-chaperonin GroES, plays an essential role in assisting protein folding. The GroEL-GroES system forms a nano-cage that allows encapsulation of the non-native substrate proteins and provides a physical environment optimized to promote and accelerate protein folding. The chain is Chaperonin GroEL 3 from Burkholderia ambifaria (strain ATCC BAA-244 / DSM 16087 / CCUG 44356 / LMG 19182 / AMMD) (Burkholderia cepacia (strain AMMD)).